The primary structure comprises 95 residues: Aspartyl/glutamyl-tRNA(Asn/Gln) amidotransferase subunit C (95 aa).

This sequence belongs to the GatC family. As to quaternary structure, heterotrimer of A, B and C subunits.

The catalysed reaction is L-glutamyl-tRNA(Gln) + L-glutamine + ATP + H2O = L-glutaminyl-tRNA(Gln) + L-glutamate + ADP + phosphate + H(+). It catalyses the reaction L-aspartyl-tRNA(Asn) + L-glutamine + ATP + H2O = L-asparaginyl-tRNA(Asn) + L-glutamate + ADP + phosphate + 2 H(+). In terms of biological role, allows the formation of correctly charged Asn-tRNA(Asn) or Gln-tRNA(Gln) through the transamidation of misacylated Asp-tRNA(Asn) or Glu-tRNA(Gln) in organisms which lack either or both of asparaginyl-tRNA or glutaminyl-tRNA synthetases. The reaction takes place in the presence of glutamine and ATP through an activated phospho-Asp-tRNA(Asn) or phospho-Glu-tRNA(Gln). In Clostridium botulinum (strain ATCC 19397 / Type A), this protein is Aspartyl/glutamyl-tRNA(Asn/Gln) amidotransferase subunit C.